A 440-amino-acid chain; its full sequence is MENIQKLIARYPLVEDLVALKETTWFNPGTTSLAQGLPYVGLTEQDVNAAHDRLARFAPYLAKAFPQTAAAGGMIESDVVAIPAMQKRLEKEYGQTIDGEMLLKKDSHLAISGSIKARGGIYEVLTHAEKLALEAGLLTTDDDYSVLLSPEFKQFFSQHSIAVGSTGNLGLSIGIMSACIGFKVTVHMSADARAWKKAKLRSHGVTVVEYEDDYGVAVEQGRKAAQSDPNCFFIDDENSRTLFLGYAVAGQRLKAQFAQQGRVVDASHPLFVYLPCGVGGGPGGVAFGLKLAFGDNVHCFFAEPTHSPCMLLGVYTGLHDAISVQDIGIDNLTAADGLAVGRASGFVGRAMERLLDGLYTLDDQTMYDMLGWLAQEEGIRLEPSALAGMAGPQRICAATEYQQRHGFSQTQLGNATHLVWATGGGMVPEDEMEQYLAKGR.

Lysine 116 carries the N6-(pyridoxal phosphate)lysine modification.

The protein belongs to the serine/threonine dehydratase family. DsdA subfamily. As to quaternary structure, monomer. Requires pyridoxal 5'-phosphate as cofactor.

It catalyses the reaction D-serine = pyruvate + NH4(+). In Salmonella paratyphi A (strain ATCC 9150 / SARB42), this protein is D-serine dehydratase.